Here is a 568-residue protein sequence, read N- to C-terminus: Estrogen receptor beta-1 (568 aa).

Residues 12–169 (SEYAEGDSSL…SLRGKADMHY (158 aa)) are modulating. 2 NR C4-type zinc fingers span residues 170–190 (CAVC…CEGC) and 206–230 (CPAT…LRKC). Positions 170-235 (CAVCSDYASG…RLRKCYEVGM (66 aa)) form a DNA-binding region, nuclear receptor. The NR LBD domain occupies 292-528 (SPEELIARIM…DLLLEMLDAH (237 aa)).

The protein belongs to the nuclear hormone receptor family. NR3 subfamily. Binds DNA as a homodimer. Can form a heterodimer with ER-alpha.

Its subcellular location is the nucleus. Binds estrogens with an affinity similar to that of ER-alpha, and activates expression of reporter genes containing estrogen response elements (ERE) in an estrogen-dependent manner. In Carassius auratus (Goldfish), this protein is Estrogen receptor beta-1 (esr2a).